The chain runs to 449 residues: mRNA-capping enzyme subunit alpha (449 aa).

Lys66 (N6-GMP-lysine intermediate) is an active-site residue. A disordered region spans residues 405–449 (DERKNGAYQHHSSSFSESRQQPKAEPVAEKKQTEPKYVDDDDWSD). Positions 414–423 (HHSSSFSESR) are enriched in polar residues. Positions 424-442 (QQPKAEPVAEKKQTEPKYV) are enriched in basic and acidic residues.

Belongs to the eukaryotic GTase family. As to quaternary structure, heterodimer. The mRNA-capping enzyme is composed of two separate chains alpha and beta, respectively a mRNA guanylyltransferase and an mRNA 5'-triphosphate monophosphatase.

It localises to the nucleus. The enzyme catalyses a 5'-end diphospho-ribonucleoside in mRNA + GTP + H(+) = a 5'-end (5'-triphosphoguanosine)-ribonucleoside in mRNA + diphosphate. Second step of mRNA capping. Transfer of the GMP moiety of GTP to the 5'-end of RNA via an enzyme-GMP covalent reaction intermediate. The protein is mRNA-capping enzyme subunit alpha (CEG1) of Candida glabrata (strain ATCC 2001 / BCRC 20586 / JCM 3761 / NBRC 0622 / NRRL Y-65 / CBS 138) (Yeast).